The sequence spans 159 residues: Serine-protein kinase RsbW (159 aa).

Belongs to the anti-sigma-factor family.

The catalysed reaction is L-seryl-[protein] + ATP = O-phospho-L-seryl-[protein] + ADP + H(+). It carries out the reaction L-threonyl-[protein] + ATP = O-phospho-L-threonyl-[protein] + ADP + H(+). Negative regulator of sigma-B activity. Phosphorylates and inactivates its specific antagonist protein, RsbV. Upon phosphorylation of RsbV, RsbW is released and binds to sigma-B, thereby blocking its ability to form an RNA polymerase holoenzyme (E-sigma-B). The sequence is that of Serine-protein kinase RsbW from Staphylococcus aureus (strain MSSA476).